Reading from the N-terminus, the 173-residue chain is Signal peptidase complex catalytic subunit SEC11 (173 aa).

Residues 1–15 (MLGVSGMQPRQLAAQ) are Cytoplasmic-facing. The helical; Signal-anchor for type II membrane protein transmembrane segment at 16-36 (ILNFALVLSTAFMMWKGLSVV) threads the bilayer. The Lumenal portion of the chain corresponds to 37-173 (SDSSSPIVVV…MGVMVVLQRE (137 aa)). Catalysis depends on charge relay system residues Ser-50, His-89, and Asp-115. Positions 159–170 (VMLGLMGVMVVL) are C-terminal short (CTS) helix.

Belongs to the peptidase S26B family. In terms of assembly, component of the signal peptidase complex (SPC) composed of a catalytic subunit SEC11 and three accessory subunits SPC1, SPC2 and SPC3. The complex induces a local thinning of the ER membrane which is used to measure the length of the signal peptide (SP) h-region of protein substrates. This ensures the selectivity of the complex towards h-regions shorter than 18-20 amino acids. SPC associates with the translocon complex.

It is found in the endoplasmic reticulum membrane. It catalyses the reaction Cleavage of hydrophobic, N-terminal signal or leader sequences from secreted and periplasmic proteins.. Its function is as follows. Catalytic component of the signal peptidase complex (SPC) which catalyzes the cleavage of N-terminal signal sequences from nascent proteins as they are translocated into the lumen of the endoplasmic reticulum. Specifically cleaves N-terminal signal peptides that contain a hydrophobic alpha-helix (h-region) shorter than 18-20 amino acids. The sequence is that of Signal peptidase complex catalytic subunit SEC11 (SEC11) from Leptosphaeria maculans (strain JN3 / isolate v23.1.3 / race Av1-4-5-6-7-8) (Blackleg fungus).